A 411-amino-acid polypeptide reads, in one-letter code: Translation initiation factor 2 subunit gamma (411 aa).

Positions 9 to 203 constitute a tr-type G domain; sequence QAEVNIGMVG…AIEDFIPTPK (195 aa). Residues 18–25 are G1; that stretch reads GHVDHGKT. Positions 21, 25, 46, and 48 each coordinate Mg(2+). Residue 21–26 coordinates GTP; it reads DHGKTT. The segment at 46 to 50 is G2; that stretch reads GITIK. 4 residues coordinate Zn(2+): Cys61, Cys64, Cys73, and Cys76. The tract at residues 90-93 is G3; that stretch reads DAPG. GTP contacts are provided by residues 146-149 and 181-183; these read NKIE and SAL. The G4 stretch occupies residues 146–149; it reads NKIE. Positions 181–183 are G5; sequence SAL.

Belongs to the TRAFAC class translation factor GTPase superfamily. Classic translation factor GTPase family. EIF2G subfamily. Heterotrimer composed of an alpha, a beta and a gamma chain. The cofactor is Mg(2+).

The enzyme catalyses GTP + H2O = GDP + phosphate + H(+). Its function is as follows. eIF-2 functions in the early steps of protein synthesis by forming a ternary complex with GTP and initiator tRNA. In Pyrococcus horikoshii (strain ATCC 700860 / DSM 12428 / JCM 9974 / NBRC 100139 / OT-3), this protein is Translation initiation factor 2 subunit gamma.